Reading from the N-terminus, the 292-residue chain is Formamidopyrimidine-DNA glycosylase (292 aa).

The active-site Schiff-base intermediate with DNA is the Pro-2. Glu-3 acts as the Proton donor in catalysis. Catalysis depends on Lys-58, which acts as the Proton donor; for beta-elimination activity. 3 residues coordinate DNA: His-98, Arg-128, and Arg-173. The FPG-type zinc-finger motif lies at 258 to 292 (LVYDRAGQPCRVCATPVRQIVQGQRSTFYCPNCQH). Arg-282 functions as the Proton donor; for delta-elimination activity in the catalytic mechanism.

This sequence belongs to the FPG family. Monomer. Zn(2+) is required as a cofactor.

The catalysed reaction is Hydrolysis of DNA containing ring-opened 7-methylguanine residues, releasing 2,6-diamino-4-hydroxy-5-(N-methyl)formamidopyrimidine.. It carries out the reaction 2'-deoxyribonucleotide-(2'-deoxyribose 5'-phosphate)-2'-deoxyribonucleotide-DNA = a 3'-end 2'-deoxyribonucleotide-(2,3-dehydro-2,3-deoxyribose 5'-phosphate)-DNA + a 5'-end 5'-phospho-2'-deoxyribonucleoside-DNA + H(+). In terms of biological role, involved in base excision repair of DNA damaged by oxidation or by mutagenic agents. Acts as a DNA glycosylase that recognizes and removes damaged bases. Has a preference for oxidized purines, such as 7,8-dihydro-8-oxoguanine (8-oxoG). Has AP (apurinic/apyrimidinic) lyase activity and introduces nicks in the DNA strand. Cleaves the DNA backbone by beta-delta elimination to generate a single-strand break at the site of the removed base with both 3'- and 5'-phosphates. This Cupriavidus necator (strain ATCC 17699 / DSM 428 / KCTC 22496 / NCIMB 10442 / H16 / Stanier 337) (Ralstonia eutropha) protein is Formamidopyrimidine-DNA glycosylase.